The sequence spans 69 residues: Putative membrane protein insertion efficiency factor (69 aa).

Belongs to the UPF0161 family.

The protein localises to the cell membrane. Could be involved in insertion of integral membrane proteins into the membrane. This Clostridium botulinum (strain ATCC 19397 / Type A) protein is Putative membrane protein insertion efficiency factor.